A 527-amino-acid polypeptide reads, in one-letter code: F-box-like/WD repeat-containing protein TBL1X (527 aa).

An N-acetylserine modification is found at S2. One can recognise a LisH domain in the interval 4–36; it reads TSDEVNFLVYRYLQESGFSHSAFTFGIESHISQ. In terms of domain architecture, F-box-like spans 41–86; it reads GTLVPPAALISILQKGLQYVEAEISINEDGTVFDGRPIESLSLIDA. K102 is modified (N6-acetyllysine). A disordered region spans residues 127–164; it reads TTPAAAAQQNPPKNGEATVNGEENGAHAINNHSKPMEI. WD repeat units lie at residues 180–219, 236–275, 277–316, 319–359, 360–399, 402–450, 453–492, and 494–526; these read GHES…NGGS, PSNK…ASTL, QHKG…AKQQ, FHSA…KTFQ, GHTN…CVHD, AHSK…CIHT, KHQE…LVHS, and RGTG…LDLR. K290 participates in a covalent cross-link: Glycyl lysine isopeptide (Lys-Gly) (interchain with G-Cter in SUMO2).

The protein belongs to the WD repeat EBI family. Homotetramer; dimer of dimers. Component of the N-Cor repressor complex, at least composed of NCOR1, NCOR2, HDAC3, TBL1X, TBL1R, CORO2A and GPS2. Component of a E3 ubiquitin ligase complex containing UBE2D1, SIAH1, CACYBP/SIP, SKP1, APC and TBL1X. Interacts with GPS2 (when sumoylated); leading to protect GPS2 against degradation by the proteasome. Probably part of other corepressor complexes, that do not contain NCOR1 and NCOR2. Interacts with histones H2B, H3a and H4. Interacts with MECP2; recruits TBL1X to the heterochromatin foci. Interacts with USP44. In terms of tissue distribution, expressed in the cochlea.

The protein resides in the nucleus. F-box-like protein involved in the recruitment of the ubiquitin/19S proteasome complex to nuclear receptor-regulated transcription units. Plays an essential role in transcription activation mediated by nuclear receptors. Probably acts as integral component of corepressor complexes that mediates the recruitment of the 19S proteasome complex, leading to the subsequent proteasomal degradation of transcription repressor complexes, thereby allowing cofactor exchange. This is F-box-like/WD repeat-containing protein TBL1X (Tbl1x) from Mus musculus (Mouse).